Reading from the N-terminus, the 252-residue chain is Tumor necrosis factor ligand superfamily member 15 (252 aa).

Topologically, residues 1 to 39 are cytoplasmic; that stretch reads MAEELGLGFGEAVPVEMLPEGCRHRREARTGLAARSKAC. The helical; Signal-anchor for type II membrane protein transmembrane segment at 40-60 threads the bilayer; sequence LALTCCLLSFPILAGLSTLLM. The Extracellular segment spans residues 61–252; that stretch reads TGQLRIPGKD…DKTFFGAFLI (192 aa). Residues 96 to 252 form the THD domain; sequence PKAHLTIMRQ…DKTFFGAFLI (157 aa). N-linked (GlcNAc...) asparagine glycosylation is present at asparagine 134. Cysteine 163 and cysteine 203 are oxidised to a cystine. Asparagine 230 carries an N-linked (GlcNAc...) asparagine glycan.

This sequence belongs to the tumor necrosis factor family. In terms of assembly, homotrimer.

It localises to the membrane. In terms of biological role, receptor for TNFRSF25 and TNFRSF6B. Mediates activation of NF-kappa-B. Inhibits vascular endothelial growth and angiogenesis (in vitro). Promotes activation of caspases and apoptosis. Promotes splenocyte alloactivation. This chain is Tumor necrosis factor ligand superfamily member 15 (Tnfsf15), found in Rattus norvegicus (Rat).